The following is a 252-amino-acid chain: 2-succinyl-6-hydroxy-2,4-cyclohexadiene-1-carboxylate synthase (252 aa).

The protein belongs to the AB hydrolase superfamily. MenH family. In terms of assembly, monomer.

It carries out the reaction 5-enolpyruvoyl-6-hydroxy-2-succinyl-cyclohex-3-ene-1-carboxylate = (1R,6R)-6-hydroxy-2-succinyl-cyclohexa-2,4-diene-1-carboxylate + pyruvate. It functions in the pathway quinol/quinone metabolism; 1,4-dihydroxy-2-naphthoate biosynthesis; 1,4-dihydroxy-2-naphthoate from chorismate: step 3/7. The protein operates within quinol/quinone metabolism; menaquinone biosynthesis. Functionally, catalyzes a proton abstraction reaction that results in 2,5-elimination of pyruvate from 2-succinyl-5-enolpyruvyl-6-hydroxy-3-cyclohexene-1-carboxylate (SEPHCHC) and the formation of 2-succinyl-6-hydroxy-2,4-cyclohexadiene-1-carboxylate (SHCHC). The protein is 2-succinyl-6-hydroxy-2,4-cyclohexadiene-1-carboxylate synthase of Salmonella typhi.